Consider the following 221-residue polypeptide: uncharacterized protein (221 aa).

In terms of domain architecture, CUE spans 20–63 (DFDRAMLDFQAMFPSLSNSHIEYVLRKYDGDVSATINELLYDNT). Positions 131–194 (EEKKKKSCSD…GPYIGEGEVK (64 aa)) are disordered. Low complexity predominate over residues 156–166 (KNSKNSKISVN). The segment covering 169–183 (KKLEPRRRSDEDRVP) has biased composition (basic and acidic residues).

This is an uncharacterized protein from Caenorhabditis elegans.